The chain runs to 210 residues: Ribosomal RNA large subunit methyltransferase E (210 aa).

Residues Gly61, Trp63, Asp81, Asp97, and Asp122 each contribute to the S-adenosyl-L-methionine site. Catalysis depends on Lys162, which acts as the Proton acceptor.

Belongs to the class I-like SAM-binding methyltransferase superfamily. RNA methyltransferase RlmE family.

It localises to the cytoplasm. The enzyme catalyses uridine(2552) in 23S rRNA + S-adenosyl-L-methionine = 2'-O-methyluridine(2552) in 23S rRNA + S-adenosyl-L-homocysteine + H(+). Its function is as follows. Specifically methylates the uridine in position 2552 of 23S rRNA at the 2'-O position of the ribose in the fully assembled 50S ribosomal subunit. The sequence is that of Ribosomal RNA large subunit methyltransferase E from Xanthomonas axonopodis pv. citri (strain 306).